The sequence spans 752 residues: DNA helicase/primase complex-associated protein (752 aa).

This sequence belongs to the herpesviridae HEPA family. As to quaternary structure, associates with the primase and the helicase to form the helicase-primase complex. Interacts with the origin-binding protein. Interacts with the polymerase catalytic subunit.

The protein localises to the host nucleus. Functionally, component of the helicase/primase complex. Unwinds the DNA at the replication forks and generates single-stranded DNA for both leading and lagging strand synthesis. The primase synthesizes short RNA primers on the lagging strand that the polymerase presumably elongates using dNTPs. The primase-associated factor has no known catalytic activity in the complex and may serve to facilitate the formation of the replisome by directly interacting with the origin-binding protein and the polymerase. The sequence is that of DNA helicase/primase complex-associated protein from Homo sapiens (Human).